A 96-amino-acid chain; its full sequence is MKTFVICLILVVAVSAAPDHHDGHLGGHQTGHQGGQQGGHLGGQQGGHLGGHQGGQPGGHLGGHQGGIGGTGGQQHGQHGPGTGAGHQGGYKTHGH.

Residues 1 to 18 (MKTFVICLILVVAVSAAP) form the signal peptide. The disordered stretch occupies residues 19 to 96 (DHHDGHLGGH…HQGGYKTHGH (78 aa)). 12 consecutive repeat copies span residues 23-26 (GHLG), 31-34 (GHQG), 35-38 (GQQG), 39-42 (GHLG), 43-46 (GQQG), 47-50 (GHLG), 51-54 (GHQG), 59-62 (GHLG), 63-66 (GHQG), 67-70 (GIGG), 77-80 (GQHG), and 86-89 (GHQG). The segment at 23–89 (GHLGGHQTGH…GPGTGAGHQG (67 aa)) is 12 X 4 AA repeats of G-X-X-G. Residues 26-89 (GGHQTGHQGG…GPGTGAGHQG (64 aa)) are compositionally biased toward gly residues.

It to H.diomphalia holotricin 3.

Its subcellular location is the secreted. In terms of biological role, antifungal heat stable protein produced in response to injury. It is active against C.albicans. No antibacterial activity against Gram-positive and Gram-negative bacteria. In Tenebrio molitor (Yellow mealworm beetle), this protein is Tenecin-3.